The chain runs to 336 residues: Anthranilate phosphoribosyltransferase (336 aa).

Residues Gly-82, 85–86, Thr-90, 92–95, 110–118, and Ser-122 each bind 5-phospho-alpha-D-ribose 1-diphosphate; these read GD, NIST, and KHGNRFASG. An anthranilate-binding site is contributed by Gly-82. Ser-94 contacts Mg(2+). Asn-113 lines the anthranilate pocket. An anthranilate-binding site is contributed by Arg-168. Mg(2+)-binding residues include Asp-227 and Glu-228.

Belongs to the anthranilate phosphoribosyltransferase family. As to quaternary structure, homodimer. The cofactor is Mg(2+).

The catalysed reaction is N-(5-phospho-beta-D-ribosyl)anthranilate + diphosphate = 5-phospho-alpha-D-ribose 1-diphosphate + anthranilate. It participates in amino-acid biosynthesis; L-tryptophan biosynthesis; L-tryptophan from chorismate: step 2/5. Its function is as follows. Catalyzes the transfer of the phosphoribosyl group of 5-phosphorylribose-1-pyrophosphate (PRPP) to anthranilate to yield N-(5'-phosphoribosyl)-anthranilate (PRA). The sequence is that of Anthranilate phosphoribosyltransferase from Desulfitobacterium hafniense (strain DSM 10664 / DCB-2).